We begin with the raw amino-acid sequence, 373 residues long: Anhydro-N-acetylmuramic acid kinase (373 aa).

Residue 12 to 19 (GTSLDGVD) coordinates ATP.

This sequence belongs to the anhydro-N-acetylmuramic acid kinase family.

It catalyses the reaction 1,6-anhydro-N-acetyl-beta-muramate + ATP + H2O = N-acetyl-D-muramate 6-phosphate + ADP + H(+). The protein operates within amino-sugar metabolism; 1,6-anhydro-N-acetylmuramate degradation. It functions in the pathway cell wall biogenesis; peptidoglycan recycling. Catalyzes the specific phosphorylation of 1,6-anhydro-N-acetylmuramic acid (anhMurNAc) with the simultaneous cleavage of the 1,6-anhydro ring, generating MurNAc-6-P. Is required for the utilization of anhMurNAc either imported from the medium or derived from its own cell wall murein, and thus plays a role in cell wall recycling. The sequence is that of Anhydro-N-acetylmuramic acid kinase from Salmonella gallinarum (strain 287/91 / NCTC 13346).